Reading from the N-terminus, the 463-residue chain is Glutamate--tRNA ligase (463 aa).

The 'HIGH' region signature appears at 8-18 (PSPTGYLHIGG). A 'KMSKS' region motif is present at residues 236–240 (RLSKR). An ATP-binding site is contributed by K239.

This sequence belongs to the class-I aminoacyl-tRNA synthetase family. Glutamate--tRNA ligase type 1 subfamily. Monomer.

Its subcellular location is the cytoplasm. It carries out the reaction tRNA(Glu) + L-glutamate + ATP = L-glutamyl-tRNA(Glu) + AMP + diphosphate. Catalyzes the attachment of glutamate to tRNA(Glu) in a two-step reaction: glutamate is first activated by ATP to form Glu-AMP and then transferred to the acceptor end of tRNA(Glu). This is Glutamate--tRNA ligase from Nitrosomonas eutropha (strain DSM 101675 / C91 / Nm57).